The primary structure comprises 340 residues: Galactoside alpha-(1,2)-fucosyltransferase 2 (340 aa).

At methionine 1–serine 7 the chain is on the cytoplasmic side. Residues phenylalanine 8–leucine 28 form a helical; Signal-anchor for type II membrane protein membrane-spanning segment. The Lumenal segment spans residues glutamine 29–histidine 340. 4 N-linked (GlcNAc...) asparagine glycosylation sites follow: asparagine 185, asparagine 251, asparagine 279, and asparagine 305.

The protein resides in the golgi apparatus. The protein localises to the golgi stack membrane. The enzyme catalyses a beta-D-galactosyl-(1-&gt;3)-N-acetyl-beta-D-glucosaminyl derivative + GDP-beta-L-fucose = an alpha-L-Fuc-(1-&gt;2)-beta-D-Gal-(1-&gt;3)-beta-D-GlcNAc derivative + GDP + H(+). It catalyses the reaction a beta-D-galactosyl-(1-&gt;4)-N-acetyl-beta-D-glucosaminyl derivative + GDP-beta-L-fucose = an alpha-L-Fuc-(1-&gt;2)-beta-D-Gal-(1-&gt;4)-beta-D-GlcNAc derivative + GDP + H(+). It carries out the reaction a neolactoside nLc4Cer + GDP-beta-L-fucose = a neolactoside IV(2)-alpha-Fuc-nLc4Cer + GDP + H(+). The catalysed reaction is a neolactoside nLc4Cer(d18:1(4E)) + GDP-beta-L-fucose = a neolactoside IV(2)-alpha-Fuc-nLc4Cer(d18:1(4E)) + GDP + H(+). The enzyme catalyses a ganglioside GM1 + GDP-beta-L-fucose = a ganglioside Fuc-GM1 + GDP + H(+). It catalyses the reaction a ganglioside GA1 + GDP-beta-L-fucose = a ganglioside Fuc-GA1 + GDP + H(+). It carries out the reaction Lc4Cer + GDP-beta-L-fucose = alpha-L-fucosyl-(1-&gt;2)-beta-D-galactosyl-(1-&gt;3)-N-acetyl-beta-D-glucosaminyl-(1-&gt;3)-beta-D-galactosyl-(1-&gt;4)-beta-D-glucosyl-(1&lt;-&gt;1')-ceramide + GDP + H(+). The catalysed reaction is a beta-D-Gal-(1-&gt;3)-beta-D-GlcNAc-(1-&gt;3)-beta-D-Gal-(1-&gt;4)-beta-D-Glc-(1&lt;-&gt;1')-Cer(d18:1(4E)) + GDP-beta-L-fucose = alpha-L-fucosyl-(1-&gt;2)- beta-D-galactosyl-(1-&gt;3)-N-acetyl-beta-D-glucosaminyl-(1-&gt;3)-beta-D-galactosyl-(1-&gt;4)-beta-D-glucosyl-(1&lt;-&gt;1')-N-acylsphing-4-enine + GDP + H(+). The enzyme catalyses a ganglioside GD1b + GDP-beta-L-fucose = a ganglioside Fuc-GD1b + GDP + H(+). It catalyses the reaction a ganglioside GM1 (d18:1(4E)) + GDP-beta-L-fucose = a ganglioside Fuc-GM1 (d18:1(4E)) + GDP + H(+). It carries out the reaction a globoside GalGb4Cer (d18:1(4E)) + GDP-beta-L-fucose = a globoside Globo-H (d18:1(4E)) + GDP + H(+). The catalysed reaction is a lactoside III(4)-a-Fuc-Lc4Cer + GDP-beta-L-fucose = a lactoside IV(2),III(4)-a-[Fuc]2-Lc4Cer + GDP + H(+). The enzyme catalyses beta-D-galactosyl-(1-&gt;3)-N-acetyl-D-galactosamine + GDP-beta-L-fucose = alpha-L-fucosyl-(1-&gt;2)-beta-D-galactosyl-(1-&gt;3)-N-acetyl-D-galactosamine + GDP + H(+). It functions in the pathway protein modification; protein glycosylation. Functionally, catalyzes the transfer of L-fucose, from a guanosine diphosphate-beta-L-fucose, to the terminal galactose on both O- and N-linked glycans chains of cell surface glycoproteins and glycolipids and the resulting epitope regulates several processes such as cell-cell interaction including host-microbe interaction, cell surface expression and cell proliferation. Preferentially fucosylates gangliosides GA1 and GM1 in the antrum, cecum and colon and in the female reproductive organs. Fucosylated host glycoproteins or glycolipids mediate interaction with intestinal microbiota influencing its composition. Creates a soluble precursor oligosaccharide FuC-alpha ((1,2)Galbeta-) called the H antigen which is an essential substrate for the final step in the soluble ABO blood group antigen synthesis pathway. The polypeptide is Galactoside alpha-(1,2)-fucosyltransferase 2 (Sus scrofa (Pig)).